The primary structure comprises 312 residues: tRNA dimethylallyltransferase (312 aa).

15–22 (GPTAAGKS) is an ATP binding site. A substrate-binding site is contributed by 17 to 22 (TAAGKS). Residues 40 to 43 (DSMQ) form an interaction with substrate tRNA region.

It belongs to the IPP transferase family. Monomer. Mg(2+) is required as a cofactor.

The catalysed reaction is adenosine(37) in tRNA + dimethylallyl diphosphate = N(6)-dimethylallyladenosine(37) in tRNA + diphosphate. In terms of biological role, catalyzes the transfer of a dimethylallyl group onto the adenine at position 37 in tRNAs that read codons beginning with uridine, leading to the formation of N6-(dimethylallyl)adenosine (i(6)A). The protein is tRNA dimethylallyltransferase of Streptomyces avermitilis (strain ATCC 31267 / DSM 46492 / JCM 5070 / NBRC 14893 / NCIMB 12804 / NRRL 8165 / MA-4680).